The sequence spans 152 residues: Small ribosomal subunit protein uS13z/uS13y/uS13x (152 aa).

At Ser-2 the chain carries N-acetylserine.

It belongs to the universal ribosomal protein uS13 family.

Its subcellular location is the cytoplasm. Functionally, located at the top of the head of the 40S subunit, it contacts several helices of the 18S rRNA. The protein is Small ribosomal subunit protein uS13z/uS13y/uS13x (RPS18A) of Arabidopsis thaliana (Mouse-ear cress).